The chain runs to 152 residues: Endoribonuclease YbeY (152 aa).

3 residues coordinate Zn(2+): His-101, His-105, and His-111. Positions 132–152 (PSSLIERTTKPAKKAAKRKKR) are disordered. A compositionally biased stretch (basic residues) spans 141–152 (KPAKKAAKRKKR).

It belongs to the endoribonuclease YbeY family. Zn(2+) serves as cofactor.

It localises to the cytoplasm. Functionally, single strand-specific metallo-endoribonuclease involved in late-stage 70S ribosome quality control and in maturation of the 3' terminus of the 16S rRNA. This Koribacter versatilis (strain Ellin345) protein is Endoribonuclease YbeY.